A 226-amino-acid polypeptide reads, in one-letter code: Glutathione peroxidase 3 (226 aa).

Residues 1–24 (MARLLQASCLLSLLLAGFLPQSRG) form the signal peptide. Sec-73 is an active-site residue. Residue Sec-73 is a non-standard amino acid, selenocysteine.

It belongs to the glutathione peroxidase family. Homotetramer. Expressed intensively in the kidney and adrenal gland, and weakly in the cerebellum, heart, and lung. Secreted in plasma.

Its subcellular location is the secreted. The catalysed reaction is 2 glutathione + H2O2 = glutathione disulfide + 2 H2O. It catalyses the reaction tert-butyl hydroperoxide + 2 glutathione = tert-butanol + glutathione disulfide + H2O. Functionally, protects cells and enzymes from oxidative damage, by catalyzing the reduction of hydrogen peroxide, lipid peroxides and organic hydroperoxide, by glutathione. This is Glutathione peroxidase 3 from Macaca fuscata fuscata (Japanese macaque).